Consider the following 329-residue polypeptide: R-linalool synthase (329 aa).

D79 is a Mg(2+) binding site. The DDXXD motif signature appears at 79–83 (DDQFD). R172 contributes to the substrate binding site. N218 and S222 together coordinate Mg(2+). The short motif at 218–226 (NELHSFEKD) is the NXXXSXXXD motif element. K225 is a substrate binding site. D226 contributes to the Mg(2+) binding site. Substrate is bound at residue 308–309 (RY).

The protein belongs to the terpene synthase family. As to quaternary structure, homodimer. Mg(2+) is required as a cofactor.

It carries out the reaction (2E)-geranyl diphosphate + H2O = (R)-linalool + diphosphate. It catalyses the reaction (2E,6E)-farnesyl diphosphate + H2O = (6E)-nerolidol + diphosphate. Its function is as follows. In vitro, catalyzes the formation of R-linalool from geranyl diphosphate (GPP). Can also accept farnesyl diphosphate (FPP) as substrate to produce trans-nerolidol. This is R-linalool synthase from Streptomyces clavuligerus.